We begin with the raw amino-acid sequence, 59 residues long: Large ribosomal subunit protein bL32 (59 aa).

Residues M1–A25 are disordered.

This sequence belongs to the bacterial ribosomal protein bL32 family.

The polypeptide is Large ribosomal subunit protein bL32 (Paraburkholderia phymatum (strain DSM 17167 / CIP 108236 / LMG 21445 / STM815) (Burkholderia phymatum)).